The primary structure comprises 207 residues: Large ribosomal subunit protein bL25 (207 aa).

The protein belongs to the bacterial ribosomal protein bL25 family. CTC subfamily. In terms of assembly, part of the 50S ribosomal subunit; part of the 5S rRNA/L5/L18/L25 subcomplex. Contacts the 5S rRNA. Binds to the 5S rRNA independently of L5 and L18.

Its function is as follows. This is one of the proteins that binds to the 5S RNA in the ribosome where it forms part of the central protuberance. This chain is Large ribosomal subunit protein bL25, found in Dictyoglomus thermophilum (strain ATCC 35947 / DSM 3960 / H-6-12).